Here is a 116-residue protein sequence, read N- to C-terminus: Insulin (116 aa).

The N-terminal stretch at 1–24 is a signal peptide; that stretch reads MAALWLQSFSLLVLLVVSWPGSQA. Intrachain disulfides connect C32-C102, C44-C115, and C101-C106. A propeptide spans 56–93 (c peptide); it reads DVDQLLGFLPPKSGGAAAAGADNEVAEFAFKDQMEMMV.

Belongs to the insulin family. As to quaternary structure, heterodimer of a B chain and an A chain linked by two disulfide bonds.

It localises to the secreted. In terms of biological role, insulin decreases blood glucose concentration. It increases cell permeability to monosaccharides, amino acids and fatty acids. It accelerates glycolysis, the pentose phosphate cycle, and glycogen synthesis in liver. In Lophius americanus (American angler), this protein is Insulin (ins).